Reading from the N-terminus, the 386-residue chain is Probable pectin lyase F (386 aa).

An N-terminal signal peptide occupies residues 1–16 (MKTAVLSLLLALQAYA). Cys-77 and Cys-101 are oxidised to a cystine. Asn-124 carries N-linked (GlcNAc...) asparagine glycosylation. Residue Arg-251 is part of the active site. A disulfide bridge connects residues Cys-326 and Cys-334.

The protein belongs to the polysaccharide lyase 1 family.

The protein resides in the secreted. It carries out the reaction Eliminative cleavage of (1-&gt;4)-alpha-D-galacturonan methyl ester to give oligosaccharides with 4-deoxy-6-O-methyl-alpha-D-galact-4-enuronosyl groups at their non-reducing ends.. In terms of biological role, pectinolytic enzymes consist of four classes of enzymes: pectin lyase, polygalacturonase, pectin methylesterase and rhamnogalacturonase. Among pectinolytic enzymes, pectin lyase is the most important in depolymerization of pectin, since it cleaves internal glycosidic bonds of highly methylated pectins. This Neosartorya fischeri (strain ATCC 1020 / DSM 3700 / CBS 544.65 / FGSC A1164 / JCM 1740 / NRRL 181 / WB 181) (Aspergillus fischerianus) protein is Probable pectin lyase F (pelF).